The primary structure comprises 98 residues: UPF0235 protein Mmc1_3654 (98 aa).

Belongs to the UPF0235 family.

The protein is UPF0235 protein Mmc1_3654 of Magnetococcus marinus (strain ATCC BAA-1437 / JCM 17883 / MC-1).